The chain runs to 248 residues: MKIIFSPSKEMREENIFENKKIEFTESKFKDKTNILIKILSKKSINEIENIMKLKGELLNNTYKDIQNYDKLKYIPAISMYYGVSFKELELEDYSEKSLKYLKNNLLILSTLYGASLAFDLLKKYRLDMTMSITDKGLYNFWKKDVNDYISNILNKDEILLNLASSEFSKLIDNKKISMINIDFKEEEDGTYKSISIYSKKARGKFLNYLVKNQVSNLEEIIKIELDGYNINKDLSDEKNFIFTRKNS.

Belongs to the UPF0246 family.

This Fusobacterium nucleatum subsp. nucleatum (strain ATCC 25586 / DSM 15643 / BCRC 10681 / CIP 101130 / JCM 8532 / KCTC 2640 / LMG 13131 / VPI 4355) protein is UPF0246 protein FN1762.